A 347-amino-acid chain; its full sequence is NADH-ubiquinone oxidoreductase chain 2 (347 aa).

Transmembrane regions (helical) follow at residues 3–23 (PLIMSIILATIILGTTIVMTG), 25–45 (HWLMIWIGFEMNMLAIIPMLM), 59–79 (YFFTQATASMLLMLAGIINLM), 96–116 (IIMTLALAMKLGLAPFHFWVP), 127–147 (GLILLTWQKLASMTGLYMISP), 148–168 (GINLNMLMTMSMLSIAIGGWG), 178–198 (IMAYSSIAHMGWMTAILIYNP), 201–221 (TLLNLVIYILMTTTMFMLFMI), 247–267 (TLLSMGGLPPLMGFLPKWMII), 276–296 (IVLPTIMAITALLNLFFYMRL), and 325–345 (LLTPMIMMSTLTLPLAPMMMI).

Belongs to the complex I subunit 2 family. Core subunit of respiratory chain NADH dehydrogenase (Complex I) which is composed of 45 different subunits. Interacts with TMEM242.

It is found in the mitochondrion inner membrane. It catalyses the reaction a ubiquinone + NADH + 5 H(+)(in) = a ubiquinol + NAD(+) + 4 H(+)(out). In terms of biological role, core subunit of the mitochondrial membrane respiratory chain NADH dehydrogenase (Complex I) which catalyzes electron transfer from NADH through the respiratory chain, using ubiquinone as an electron acceptor. Essential for the catalytic activity and assembly of complex I. The protein is NADH-ubiquinone oxidoreductase chain 2 of Ozimops beccarii (Beccari's free-tailed bat).